The chain runs to 159 residues: Keratin-associated protein 9-3 (159 aa).

16 consecutive repeat copies span residues 8-12, 13-17, 32-36, 37-41, 46-50, 51-55, 56-60, 61-65, 70-74, 75-79, 80-84, 85-89, 129-133, 134-138, 139-143, and 153-157. Residues 8–157 form a 16 X 5 AA repeats of C-C-[RQVSHE]-[SPTN]-[TASPI] region; sequence CCQPTCCRTT…TCVYSCCQPS (150 aa).

The protein belongs to the KRTAP type 9 family. Interacts with hair keratins.

Functionally, in the hair cortex, hair keratin intermediate filaments are embedded in an interfilamentous matrix, consisting of hair keratin-associated proteins (KRTAP), which are essential for the formation of a rigid and resistant hair shaft through their extensive disulfide bond cross-linking with abundant cysteine residues of hair keratins. The matrix proteins include the high-sulfur and high-glycine-tyrosine keratins. The protein is Keratin-associated protein 9-3 (KRTAP9-3) of Homo sapiens (Human).